We begin with the raw amino-acid sequence, 343 residues long: tRNA N6-adenosine threonylcarbamoyltransferase (343 aa).

H114 and H118 together coordinate Fe cation. Substrate is bound by residues 137 to 141 (LVSGG), D171, G184, D188, and N278. Residue D306 coordinates Fe cation.

It belongs to the KAE1 / TsaD family. It depends on Fe(2+) as a cofactor.

It localises to the cytoplasm. The enzyme catalyses L-threonylcarbamoyladenylate + adenosine(37) in tRNA = N(6)-L-threonylcarbamoyladenosine(37) in tRNA + AMP + H(+). Functionally, required for the formation of a threonylcarbamoyl group on adenosine at position 37 (t(6)A37) in tRNAs that read codons beginning with adenine. Is involved in the transfer of the threonylcarbamoyl moiety of threonylcarbamoyl-AMP (TC-AMP) to the N6 group of A37, together with TsaE and TsaB. TsaD likely plays a direct catalytic role in this reaction. The chain is tRNA N6-adenosine threonylcarbamoyltransferase from Acidothermus cellulolyticus (strain ATCC 43068 / DSM 8971 / 11B).